Consider the following 380-residue polypeptide: Cytochrome b (380 aa).

4 helical membrane-spanning segments follow: residues 33 to 53, 77 to 98, 113 to 133, and 178 to 198; these read LGSLLGTCLVLQIVTGLFLAM, WVIRYLHANGASMFFICLFLHI, WNIGIILLLATMATAFMGYVL, and FFTFHFILPFIITALVALHLL. Residues H83 and H97 each contribute to the heme b site. Heme b contacts are provided by H182 and H196. H201 contributes to the a ubiquinone binding site. A run of 4 helical transmembrane segments spans residues 226–246, 288–308, 320–340, and 347–367; these read TKDILGLFLLLLTLMSLVLFS, LGGVLALLLSILILMTIPMLH, LSQLTYWLWAANLLTLTWIGG, and FITIGQVTSVLYFITILILVP.

It belongs to the cytochrome b family. As to quaternary structure, the cytochrome bc1 complex contains 11 subunits: 3 respiratory subunits (MT-CYB, CYC1 and UQCRFS1), 2 core proteins (UQCRC1 and UQCRC2) and 6 low-molecular weight proteins (UQCRH/QCR6, UQCRB/QCR7, UQCRQ/QCR8, UQCR10/QCR9, UQCR11/QCR10 and a cleavage product of UQCRFS1). This cytochrome bc1 complex then forms a dimer. Heme b serves as cofactor.

It is found in the mitochondrion inner membrane. Component of the ubiquinol-cytochrome c reductase complex (complex III or cytochrome b-c1 complex) that is part of the mitochondrial respiratory chain. The b-c1 complex mediates electron transfer from ubiquinol to cytochrome c. Contributes to the generation of a proton gradient across the mitochondrial membrane that is then used for ATP synthesis. The protein is Cytochrome b (MT-CYB) of Nomascus leucogenys (Northern white-cheeked gibbon).